The following is a 627-amino-acid chain: MPIQVLPPQLANQIAAGEVVERPASVVKELVENSLDAGATRIDIDIERGGAKLIRIRDNGCGIKKDELALALARHATSKIASLDDLEAIISLGFRGEALASISSVSRLTLTSRTAEQQEAWQAYAEGRDMDVTVKPAAHPVGTTLEVLDLFYNTPARRKFLRTEKTEFSHIDEIIRRIALARFDVTINLSHNGKIVRQYRAVPEGGQKERRLGAICGTAFLEQALAIEWQHGDLTLRGWVADPNHTTPALAEIQYCYVNGRMMRDRLINHAIRQACEDKLGADQQPAFVLYLEIDPHQVDVNVHPAKHEVRFHQSRLVHDFIYQGVLSVLQQQLETPLPLDDEPQPAPRAIPENRVAAGRNHFAEPAAREPVAPRYSPAPASGSRPAAPWPNAQPGYQKQQGEVYRQLLQTPAPMQKPKAPEPQEPALAANSQSFGRVLTIVHSDCALLERDGNISLLSLPVAERWLRQAQLTPGEAPVCAQPLLIPLRLKVSGEEKSALEKAQSALAELGIDFQSDAQHVTIRAVPLPLRQQNLQILIPELIGYLAKQSVFEPGNIAQWIARNLMSEHAQWIARNLMSEHAQWSMAQAITLLADVERLCPQLVKTPPGGLLQSVDLHPAIKALKDE.

Residues 363 to 397 (FAEPAAREPVAPRYSPAPASGSRPAAPWPNAQPGY) are disordered. Low complexity predominate over residues 364-387 (AEPAAREPVAPRYSPAPASGSRPA).

Belongs to the DNA mismatch repair MutL/HexB family.

In terms of biological role, this protein is involved in the repair of mismatches in DNA. It is required for dam-dependent methyl-directed DNA mismatch repair. May act as a 'molecular matchmaker', a protein that promotes the formation of a stable complex between two or more DNA-binding proteins in an ATP-dependent manner without itself being part of a final effector complex. The chain is DNA mismatch repair protein MutL from Shigella flexneri serotype 5b (strain 8401).